Here is a 133-residue protein sequence, read N- to C-terminus: Phosphoribosyl-AMP cyclohydrolase (133 aa).

Asp-77 serves as a coordination point for Mg(2+). Cys-78 serves as a coordination point for Zn(2+). Asp-79 and Asp-81 together coordinate Mg(2+). Positions 95 and 102 each coordinate Zn(2+).

Belongs to the PRA-CH family. Homodimer. Mg(2+) serves as cofactor. Zn(2+) is required as a cofactor.

It is found in the cytoplasm. It catalyses the reaction 1-(5-phospho-beta-D-ribosyl)-5'-AMP + H2O = 1-(5-phospho-beta-D-ribosyl)-5-[(5-phospho-beta-D-ribosylamino)methylideneamino]imidazole-4-carboxamide. The protein operates within amino-acid biosynthesis; L-histidine biosynthesis; L-histidine from 5-phospho-alpha-D-ribose 1-diphosphate: step 3/9. Its function is as follows. Catalyzes the hydrolysis of the adenine ring of phosphoribosyl-AMP. This chain is Phosphoribosyl-AMP cyclohydrolase, found in Pseudomonas fluorescens (strain Pf0-1).